The following is a 591-amino-acid chain: NADP-dependent malic enzyme (591 aa).

Basic and acidic residues predominate over residues 1–10 (MESTLKEMRD). The disordered stretch occupies residues 1-26 (MESTLKEMRDGASVLDMDPKSTVGGG). The active-site Proton donor is the Tyr-139. Arg-192 contributes to the NAD(+) binding site. The active-site Proton acceptor is the Lys-210. A divalent metal cation contacts are provided by Glu-282, Asp-283, and Asp-306. Asp-306 contacts NAD(+). 335–351 (LFLGAGEAGTGIAELIA) contributes to the NADP(+) binding site. Asn-447 contributes to the NAD(+) binding site.

It belongs to the malic enzymes family. As to quaternary structure, homotetramer. The cofactor is Mg(2+). Requires Mn(2+) as cofactor. MRNA found twofold higher in leaves and stems than in roots.

Its subcellular location is the cytoplasm. It catalyses the reaction (S)-malate + NADP(+) = pyruvate + CO2 + NADPH. The enzyme catalyses oxaloacetate + H(+) = pyruvate + CO2. This Populus trichocarpa (Western balsam poplar) protein is NADP-dependent malic enzyme.